The primary structure comprises 238 residues: Transcription termination/antitermination protein NusG (238 aa).

This sequence belongs to the NusG family.

Its function is as follows. Participates in transcription elongation, termination and antitermination. This Mycobacterium tuberculosis (strain CDC 1551 / Oshkosh) protein is Transcription termination/antitermination protein NusG.